The chain runs to 369 residues: Ferredoxin--NADP reductase 2 (369 aa).

A disordered region spans residues 1-23; that stretch reads MDLSIPNPVADTTKQVDGGSPAG. 7 residues coordinate FAD: aspartate 58, glutamine 66, tyrosine 71, valine 111, phenylalanine 146, aspartate 311, and threonine 352.

Belongs to the ferredoxin--NADP reductase type 2 family. In terms of assembly, homodimer. FAD is required as a cofactor.

It catalyses the reaction 2 reduced [2Fe-2S]-[ferredoxin] + NADP(+) + H(+) = 2 oxidized [2Fe-2S]-[ferredoxin] + NADPH. The sequence is that of Ferredoxin--NADP reductase 2 from Cupriavidus necator (strain ATCC 17699 / DSM 428 / KCTC 22496 / NCIMB 10442 / H16 / Stanier 337) (Ralstonia eutropha).